A 165-amino-acid chain; its full sequence is Immunity protein YokJ (165 aa).

Probably interacts with cognate toxin YokI but not with other non-cognate toxins. The interaction inhibits the toxic activity of YokI.

It is found in the cytoplasm. In terms of biological role, immunity component of one of 6 LXG toxin-immunity modules in this strain. They promote kin selection, mediate competition in biofilms, and drive spatial segregation of different strains, indicating that LXG toxins may help avoid warfare between strains in biofilms. Mediates intercellular competition during biofilm formation; disruption of the operon disadvantages the bacteria, but overexpression of the cognate immunity protein restores growth in competition with wild-type. In situ neutralizes the toxic effect of cognate toxin YokI. Neutralizes the ability to inhibit growth of cognate toxin YokI upon expression in E.coli. Does not have immunity protein activity on other LXG toxins. This Bacillus subtilis (strain 168) protein is Immunity protein YokJ (yokJ).